The following is a 331-amino-acid chain: C-type lectin domain family 4 member K (331 aa).

The Cytoplasmic segment spans residues 1-41; that stretch reads MPEAEMKEEAPEAHFTVDKQNISLWPREPPPKQDLSPVLRK. A helical; Signal-anchor for type II membrane protein membrane pass occupies residues 42–62; it reads PLCICVAFTCLALVLVTSIVL. At 63–331 the chain is on the extracellular side; it reads QAVFYPRLMG…CKRPYVQTTE (269 aa). N-linked (GlcNAc...) asparagine glycans are attached at residues N90 and N116. Positions 106–197 form a coiled coil; that stretch reads DDAEVQMQIV…LKQQSDILEM (92 aa). The 119-residue stretch at 205-323 folds into the C-type lectin domain; the sequence is FSGNFYYFSR…CDNTFLFICK (119 aa). 2 disulfides stabilise this stretch: C226–C322 and C298–C314.

As to quaternary structure, homotrimer. As to expression, expressed by Langerhans cells. Expressed in dendritic cells and by scattered cells in lymph nodes and spleen. Also detected in some non-lymphoid tissues such as lung, liver and heart.

Its subcellular location is the membrane. Functionally, calcium-dependent lectin displaying mannose-binding specificity. Induces the formation of Birbeck granules (BGs); is a potent regulator of membrane superimposition and zippering. Binds to sulfated as well as mannosylated glycans, keratan sulfate (KS) and beta-glucans. Facilitates uptake of antigens and is involved in the routing and/or processing of antigen for presentation to T cells. The protein is C-type lectin domain family 4 member K (Cd207) of Mus musculus (Mouse).